Consider the following 270-residue polypeptide: Phosphatidylglycerol--prolipoprotein diacylglyceryl transferase (270 aa).

The next 4 membrane-spanning stretches (helical) occupy residues 19-39 (FPVY…LWLA), 56-76 (LVLI…VIFE), 92-112 (QGGL…ILFA), and 116-136 (GVSF…GQAI). An a 1,2-diacyl-sn-glycero-3-phospho-(1'-sn-glycerol)-binding site is contributed by arginine 138. The next 3 helical transmembrane spans lie at 178-198 (HPTF…LLAL), 206-226 (GELF…VEGL), and 236-256 (LRIA…FIIV).

The protein belongs to the Lgt family.

It localises to the cell membrane. The enzyme catalyses L-cysteinyl-[prolipoprotein] + a 1,2-diacyl-sn-glycero-3-phospho-(1'-sn-glycerol) = an S-1,2-diacyl-sn-glyceryl-L-cysteinyl-[prolipoprotein] + sn-glycerol 1-phosphate + H(+). The protein operates within protein modification; lipoprotein biosynthesis (diacylglyceryl transfer). In terms of biological role, catalyzes the transfer of the diacylglyceryl group from phosphatidylglycerol to the sulfhydryl group of the N-terminal cysteine of a prolipoprotein, the first step in the formation of mature lipoproteins. The protein is Phosphatidylglycerol--prolipoprotein diacylglyceryl transferase of Bacillus cereus (strain ZK / E33L).